Here is a 100-residue protein sequence, read N- to C-terminus: Small ribosomal subunit protein uS14c (100 aa).

Belongs to the universal ribosomal protein uS14 family. As to quaternary structure, part of the 30S ribosomal subunit.

The protein resides in the plastid. Its subcellular location is the chloroplast. Functionally, binds 16S rRNA, required for the assembly of 30S particles. The protein is Small ribosomal subunit protein uS14c of Stigeoclonium helveticum (Green alga).